The sequence spans 445 residues: METIFAQSSAFGKAGVAVFRISGPKSLEVLQLLTGRKDFKSRLMYYQQITVPETKELIDNVMVVYFKSPGSFTGEDVVEIHTHGSKAISIMLTNALLNIAGIRLAEAGEFTKRAFLNNKFDLTAAEGIADLINAETIMQHKQAIRQASGKLEALYNNWRSQLLKMLSLLEAYIDFPDEDIPDTVLNEVTNTHTILVNTISEYLNDNRKGELLRSGLKLAIIGPPNVGKSSLLNFLMQRDIAIVSNIAGTTRDIIEGHLDIGGYPIILQDTAGIREESSDIIEQEGIKRAINSAKTADIKIIMFDAEKLDSSINEDIINLIDENTITIINKIDLIEASKIFSIENKYKCLRVSVKNNIALSSILKNIENIAENMAGFTETPYITNQRHRNYLQQALSHLTAFSLDNDLVLATEDIRMTARCIGAITGVINVEEILGEIFKNFCIGK.

Arg20, Glu79, and Lys119 together coordinate (6S)-5-formyl-5,6,7,8-tetrahydrofolate. The TrmE-type G domain maps to 215 to 371 (GLKLAIIGPP…ILKNIENIAE (157 aa)). Residue Asn225 coordinates K(+). GTP contacts are provided by residues 225–230 (NVGKSS), 244–250 (SNIAGTT), and 269–272 (DTAG). Ser229 contributes to the Mg(2+) binding site. Residues Ser244, Ile246, and Thr249 each coordinate K(+). Thr250 is a binding site for Mg(2+). Residue Lys445 coordinates (6S)-5-formyl-5,6,7,8-tetrahydrofolate.

This sequence belongs to the TRAFAC class TrmE-Era-EngA-EngB-Septin-like GTPase superfamily. TrmE GTPase family. In terms of assembly, homodimer. Heterotetramer of two MnmE and two MnmG subunits. K(+) is required as a cofactor.

It is found in the cytoplasm. Its function is as follows. Exhibits a very high intrinsic GTPase hydrolysis rate. Involved in the addition of a carboxymethylaminomethyl (cmnm) group at the wobble position (U34) of certain tRNAs, forming tRNA-cmnm(5)s(2)U34. The sequence is that of tRNA modification GTPase MnmE from Rickettsia conorii (strain ATCC VR-613 / Malish 7).